A 226-amino-acid polypeptide reads, in one-letter code: Urease accessory protein UreF (226 aa).

It belongs to the UreF family. In terms of assembly, ureD, UreF and UreG form a complex that acts as a GTP-hydrolysis-dependent molecular chaperone, activating the urease apoprotein by helping to assemble the nickel containing metallocenter of UreC. The UreE protein probably delivers the nickel.

The protein localises to the cytoplasm. Required for maturation of urease via the functional incorporation of the urease nickel metallocenter. The chain is Urease accessory protein UreF from Corynebacterium glutamicum (strain R).